The primary structure comprises 181 residues: uncharacterized protein (181 aa).

Belongs to the methyltransferase superfamily.

This is an uncharacterized protein from Bacillus subtilis (strain 168).